Here is a 95-residue protein sequence, read N- to C-terminus: Small ribosomal subunit protein bS18 (95 aa).

It belongs to the bacterial ribosomal protein bS18 family. Part of the 30S ribosomal subunit. Forms a tight heterodimer with protein bS6.

In terms of biological role, binds as a heterodimer with protein bS6 to the central domain of the 16S rRNA, where it helps stabilize the platform of the 30S subunit. This Rickettsia africae (strain ESF-5) protein is Small ribosomal subunit protein bS18.